The chain runs to 326 residues: N-acetyl-gamma-glutamyl-phosphate reductase (326 aa).

Residue Cys155 is part of the active site.

This sequence belongs to the NAGSA dehydrogenase family. Type 1 subfamily.

The protein localises to the cytoplasm. It catalyses the reaction N-acetyl-L-glutamate 5-semialdehyde + phosphate + NADP(+) = N-acetyl-L-glutamyl 5-phosphate + NADPH + H(+). It functions in the pathway amino-acid biosynthesis; L-arginine biosynthesis; N(2)-acetyl-L-ornithine from L-glutamate: step 3/4. Catalyzes the NADPH-dependent reduction of N-acetyl-5-glutamyl phosphate to yield N-acetyl-L-glutamate 5-semialdehyde. This is N-acetyl-gamma-glutamyl-phosphate reductase from Shewanella baltica (strain OS195).